Here is a 186-residue protein sequence, read N- to C-terminus: Guanylate kinase (186 aa).

Positions 5–183 (GNLTVLTGPS…AFKEIEGFMG (179 aa)) constitute a Guanylate kinase-like domain. 12-19 (GPSGVGKG) is a binding site for ATP.

This sequence belongs to the guanylate kinase family.

It localises to the cytoplasm. The catalysed reaction is GMP + ATP = GDP + ADP. Its function is as follows. Essential for recycling GMP and indirectly, cGMP. This Prochlorococcus marinus (strain NATL2A) protein is Guanylate kinase.